The chain runs to 104 residues: MKVHVRKSDTVVVISGKDKGKTGEVLKVYPKTGKVLVQGINIVKKHQKANKSQVESAIIEREAAINSSKVMLYCNKCKNATRIASKILDDGTKVRVCKKCSETF.

The protein belongs to the universal ribosomal protein uL24 family. In terms of assembly, part of the 50S ribosomal subunit.

In terms of biological role, one of two assembly initiator proteins, it binds directly to the 5'-end of the 23S rRNA, where it nucleates assembly of the 50S subunit. One of the proteins that surrounds the polypeptide exit tunnel on the outside of the subunit. The sequence is that of Large ribosomal subunit protein uL24 from Clostridium botulinum (strain Eklund 17B / Type B).